A 151-amino-acid polypeptide reads, in one-letter code: S-ribosylhomocysteine lyase (151 aa).

Fe cation-binding residues include His54, His58, and Cys121.

It belongs to the LuxS family. Homodimer. It depends on Fe cation as a cofactor.

It catalyses the reaction S-(5-deoxy-D-ribos-5-yl)-L-homocysteine = (S)-4,5-dihydroxypentane-2,3-dione + L-homocysteine. Functionally, involved in the synthesis of autoinducer 2 (AI-2) which is secreted by bacteria and is used to communicate both the cell density and the metabolic potential of the environment. The regulation of gene expression in response to changes in cell density is called quorum sensing. Catalyzes the transformation of S-ribosylhomocysteine (RHC) to homocysteine (HC) and 4,5-dihydroxy-2,3-pentadione (DPD). This chain is S-ribosylhomocysteine lyase, found in Clostridium perfringens (strain ATCC 13124 / DSM 756 / JCM 1290 / NCIMB 6125 / NCTC 8237 / Type A).